We begin with the raw amino-acid sequence, 166 residues long: Lipoprotein signal peptidase (166 aa).

4 helical membrane passes run 9-29, 45-65, 71-91, and 100-120; these read ASGALAPWLGISLIVILFDQL, ALTSFFNLVLVYNRGAAFGFL, WQRWAFTALGVGATLVICFLL, and FSVSLALILGGALGNVIDRLV. Residues Asp-126 and Asp-144 contribute to the active site. The helical transmembrane segment at 135 to 155 threads the bilayer; the sequence is WHFPAFNLADSAITIGAVLLI.

Belongs to the peptidase A8 family.

Its subcellular location is the cell inner membrane. It carries out the reaction Release of signal peptides from bacterial membrane prolipoproteins. Hydrolyzes -Xaa-Yaa-Zaa-|-(S,diacylglyceryl)Cys-, in which Xaa is hydrophobic (preferably Leu), and Yaa (Ala or Ser) and Zaa (Gly or Ala) have small, neutral side chains.. Its pathway is protein modification; lipoprotein biosynthesis (signal peptide cleavage). This protein specifically catalyzes the removal of signal peptides from prolipoproteins. The polypeptide is Lipoprotein signal peptidase (Burkholderia cenocepacia (strain ATCC BAA-245 / DSM 16553 / LMG 16656 / NCTC 13227 / J2315 / CF5610) (Burkholderia cepacia (strain J2315))).